A 288-amino-acid polypeptide reads, in one-letter code: Pantothenate synthetase (288 aa).

30-37 (MGALHEGH) serves as a coordination point for ATP. The Proton donor role is filled by His-37. Gln-61 contacts (R)-pantoate. Residue Gln-61 coordinates beta-alanine. 147–150 (GEKD) serves as a coordination point for ATP. Residue Gln-153 participates in (R)-pantoate binding. Residues Leu-176 and 184–187 (ISSR) each bind ATP.

This sequence belongs to the pantothenate synthetase family. In terms of assembly, homodimer.

The protein resides in the cytoplasm. The enzyme catalyses (R)-pantoate + beta-alanine + ATP = (R)-pantothenate + AMP + diphosphate + H(+). The protein operates within cofactor biosynthesis; (R)-pantothenate biosynthesis; (R)-pantothenate from (R)-pantoate and beta-alanine: step 1/1. In terms of biological role, catalyzes the condensation of pantoate with beta-alanine in an ATP-dependent reaction via a pantoyl-adenylate intermediate. The protein is Pantothenate synthetase of Prosthecochloris aestuarii (strain DSM 271 / SK 413).